The following is a 306-amino-acid chain: Curved DNA-binding protein (306 aa).

The J domain occupies 5 to 69 (DYYAIMGVKP…QRRAEYDQLW (65 aa)).

The protein localises to the cytoplasm. The protein resides in the nucleoid. In terms of biological role, DNA-binding protein that preferentially recognizes a curved DNA sequence. It is probably a functional analog of DnaJ; displays overlapping activities with DnaJ, but functions under different conditions, probably acting as a molecular chaperone in an adaptive response to environmental stresses other than heat shock. Lacks autonomous chaperone activity; binds native substrates and targets them for recognition by DnaK. Its activity is inhibited by the binding of CbpM. In Salmonella arizonae (strain ATCC BAA-731 / CDC346-86 / RSK2980), this protein is Curved DNA-binding protein.